A 971-amino-acid polypeptide reads, in one-letter code: Exportin-2 (971 aa).

M1 is subject to N-acetylmethionine. In terms of domain architecture, Importin N-terminal spans 29–102 (AEKFLESVEG…KANIVHLMLS (74 aa)). S112 is subject to Phosphoserine. N6-acetyllysine is present on residues K574 and K824. S931 carries the phosphoserine modification.

Belongs to the XPO2/CSE1 family. As to quaternary structure, found in a complex with CSE1L/XPO2, Ran and KPNA2. Binds with high affinity to importin-alpha only in the presence of RanGTP. The complex is dissociated by the combined action of RanBP1 and RanGAP1. Interacts with CFTR. In terms of tissue distribution, ubiquitous. Detected in embryos from 5 to 17 dpc. Highly expressed in adult testis, heart, brain, lung, liver, skeletal muscle, spleen and kidney.

The protein resides in the cytoplasm. The protein localises to the nucleus. Its function is as follows. Export receptor for importin-alpha. Mediates importin-alpha re-export from the nucleus to the cytoplasm after import substrates (cargos) have been released into the nucleoplasm. In the nucleus binds cooperatively to importin-alpha and to the GTPase Ran in its active GTP-bound form. Docking of this trimeric complex to the nuclear pore complex (NPC) is mediated through binding to nucleoporins. Upon transit of a nuclear export complex into the cytoplasm, disassembling of the complex and hydrolysis of Ran-GTP to Ran-GDP (induced by RANBP1 and RANGAP1, respectively) cause release of the importin-alpha from the export receptor. CSE1L/XPO2 then return to the nuclear compartment and mediate another round of transport. The directionality of nuclear export is thought to be conferred by an asymmetric distribution of the GTP- and GDP-bound forms of Ran between the cytoplasm and nucleus. The polypeptide is Exportin-2 (Cse1l) (Mus musculus (Mouse)).